Here is a 431-residue protein sequence, read N- to C-terminus: Peroxisomal biogenesis factor 3 (431 aa).

The Peroxisomal segment spans residues 1-10 (MDFFRRHQKK). A helical transmembrane segment spans residues 11-28 (VLALVGVALSSYLFIDYV). Residues 29–431 (KKKFFEIQGR…VVYSSFDWAL (403 aa)) lie on the Cytoplasmic side of the membrane. A disordered region spans residues 95-126 (TDRVLALESSTSSSATAQTVPTMTSGATEEGE). A compositionally biased stretch (polar residues) spans 112 to 121 (QTVPTMTSGA).

This sequence belongs to the peroxin-3 family.

It is found in the peroxisome membrane. Involved in peroxisome biosynthesis. Seems to directly or indirectly sequesters components of the peroxisome biogenesis machinery. The sequence is that of Peroxisomal biogenesis factor 3 (PEX3) from Yarrowia lipolytica (strain CLIB 122 / E 150) (Yeast).